Here is a 575-residue protein sequence, read N- to C-terminus: Isocitrate dehydrogenase kinase/phosphatase (575 aa).

ATP contacts are provided by residues 315-321 and K336; that span reads APGVKGM. D371 is an active-site residue.

This sequence belongs to the AceK family.

The protein localises to the cytoplasm. It catalyses the reaction L-seryl-[isocitrate dehydrogenase] + ATP = O-phospho-L-seryl-[isocitrate dehydrogenase] + ADP + H(+). In terms of biological role, bifunctional enzyme which can phosphorylate or dephosphorylate isocitrate dehydrogenase (IDH) on a specific serine residue. This is a regulatory mechanism which enables bacteria to bypass the Krebs cycle via the glyoxylate shunt in response to the source of carbon. When bacteria are grown on glucose, IDH is fully active and unphosphorylated, but when grown on acetate or ethanol, the activity of IDH declines drastically concomitant with its phosphorylation. In Yersinia enterocolitica serotype O:8 / biotype 1B (strain NCTC 13174 / 8081), this protein is Isocitrate dehydrogenase kinase/phosphatase.